The following is a 395-amino-acid chain: Phosphoglycerate kinase (395 aa).

Residues 21 to 23, Arg36, 59 to 62, Arg114, and Arg147 contribute to the substrate site; these read DIN and HFGR. ATP is bound by residues Lys197, Glu322, and 352–355; that span reads GGDT.

This sequence belongs to the phosphoglycerate kinase family. In terms of assembly, monomer.

Its subcellular location is the cytoplasm. The catalysed reaction is (2R)-3-phosphoglycerate + ATP = (2R)-3-phospho-glyceroyl phosphate + ADP. The protein operates within carbohydrate degradation; glycolysis; pyruvate from D-glyceraldehyde 3-phosphate: step 2/5. This Roseobacter denitrificans (strain ATCC 33942 / OCh 114) (Erythrobacter sp. (strain OCh 114)) protein is Phosphoglycerate kinase.